Consider the following 856-residue polypeptide: Rod cGMP-specific 3',5'-cyclic phosphodiesterase subunit beta (856 aa).

S2 is subject to N-acetylserine. GAF domains are found at residues 71–220 (NMER…TLNL) and 252–429 (DIER…GWSV). In terms of domain architecture, PDEase spans 481-814 (EEDELGILLK…KEWKALADEY (334 aa)). H557 serves as the catalytic Proton donor. The a divalent metal cation site is built by H561, H597, D598, and D718. Residues 823–833 (EEKQQQEDRTT) show a composition bias toward basic and acidic residues. The interval 823-842 (EEKQQQEDRTTAKKAGTEIC) is disordered. C853 is lipidated: S-geranylgeranyl cysteine. A propeptide spans 854–856 (CIL) (removed in mature form).

This sequence belongs to the cyclic nucleotide phosphodiesterase family. Oligomer composed of two catalytic chains (alpha and beta), an inhibitory chain (gamma) and the delta chain. A divalent metal cation is required as a cofactor.

Its subcellular location is the membrane. The protein localises to the cell projection. The protein resides in the cilium. It localises to the photoreceptor outer segment. The enzyme catalyses 3',5'-cyclic GMP + H2O = GMP + H(+). In terms of biological role, rod-specific cGMP phosphodiesterase that catalyzes the hydrolysis of 3',5'-cyclic GMP. Necessary for the formation of a functional phosphodiesterase holoenzyme. Involved in retinal circadian rhythm photoentrainment via modulation of UVA and orange light-induced phase-shift of the retina clock. May participate in processes of transmission and amplification of the visual signal. The polypeptide is Rod cGMP-specific 3',5'-cyclic phosphodiesterase subunit beta (Canis lupus familiaris (Dog)).